The primary structure comprises 435 residues: Tol-Pal system protein TolB (435 aa).

An N-terminal signal peptide occupies residues 1-20 (MRKIIAGVFIFVFLISNLYA).

Belongs to the TolB family. In terms of assembly, the Tol-Pal system is composed of five core proteins: the inner membrane proteins TolA, TolQ and TolR, the periplasmic protein TolB and the outer membrane protein Pal. They form a network linking the inner and outer membranes and the peptidoglycan layer.

The protein localises to the periplasm. Functionally, part of the Tol-Pal system, which plays a role in outer membrane invagination during cell division and is important for maintaining outer membrane integrity. In Francisella tularensis subsp. mediasiatica (strain FSC147), this protein is Tol-Pal system protein TolB.